The primary structure comprises 393 residues: S-adenosylmethionine synthase (393 aa).

H16 contacts ATP. D18 lines the Mg(2+) pocket. Position 44 (E44) interacts with K(+). E57 and Q100 together coordinate L-methionine. Positions 100-110 (QSNDIAQGVDH) are flexible loop. ATP-binding positions include 167 to 169 (DAK), 238 to 239 (RF), D247, 253 to 254 (RK), A270, and K274. L-methionine is bound at residue D247. L-methionine is bound at residue K278.

It belongs to the AdoMet synthase family. In terms of assembly, homotetramer; dimer of dimers. The cofactor is Mg(2+). K(+) is required as a cofactor.

It localises to the cytoplasm. It catalyses the reaction L-methionine + ATP + H2O = S-adenosyl-L-methionine + phosphate + diphosphate. It functions in the pathway amino-acid biosynthesis; S-adenosyl-L-methionine biosynthesis; S-adenosyl-L-methionine from L-methionine: step 1/1. In terms of biological role, catalyzes the formation of S-adenosylmethionine (AdoMet) from methionine and ATP. The overall synthetic reaction is composed of two sequential steps, AdoMet formation and the subsequent tripolyphosphate hydrolysis which occurs prior to release of AdoMet from the enzyme. The polypeptide is S-adenosylmethionine synthase (Albidiferax ferrireducens (strain ATCC BAA-621 / DSM 15236 / T118) (Rhodoferax ferrireducens)).